The chain runs to 120 residues: Protein BEX4 (120 aa).

The segment at 1–54 (MESKEELAANNLNGENAQQENEGGEQAPTQNEEESRHLGGGEGQKPGGNIRRGR) is disordered. Positions 8 to 27 (AANNLNGENAQQENEGGEQA) are enriched in low complexity. Residues 31–90 (NEEESRHLGGGEGQKPGGNIRRGRVRRLVPNFRWAIPNRHIEHNEARDDVERFVGQMMEI) form an interaction with SIRT2 region. Residues 31-120 (NEEESRHLGG…DNHYDFCLIP (90 aa)) are interaction with alpha-tubulin. Cys-117 is a binding site for Zn(2+).

The protein belongs to the BEX family. Interacts with alpha-tubulin. Interacts with SIRT2. In terms of processing, ubiquitinated and degraded by the proteasome. As to expression, very high expression in heart, skeletal muscle, liver, and kidney. The levels of expression are uniform throughout the brain.

Its subcellular location is the cytoplasm. The protein resides in the cytoskeleton. The protein localises to the spindle pole. It localises to the nucleus. May play a role in microtubule deacetylation by negatively regulating the SIRT2 deacetylase activity toward alpha-tubulin and thereby participate in the control of cell cycle progression and genomic stability. In absence of reductive stress, acts as a pseudosubstrate for the CRL2(FEM1B) complex: associates with FEM1B via zinc, thereby preventing association between FEM1B and its substrates. In Homo sapiens (Human), this protein is Protein BEX4.